Here is a 238-residue protein sequence, read N- to C-terminus: Citrate-binding protein (238 aa).

Positions 1-31 (MKMKRSPYCFCCSFALLLLVSFLKDRHFCSA) are cleaved as a signal peptide. The propeptide at 225–238 (LEGCNNNHGTWLVQ) is removed in mature form.

The protein localises to the vacuole. May be a subunit of a vacuolar malate and citrate transporter. In Hevea brasiliensis (Para rubber tree), this protein is Citrate-binding protein (CBP).